The sequence spans 708 residues: Exocyst complex component 8 (708 aa).

In terms of domain architecture, PH spans 168 to 268 (YLVYNGDLLE…WLEVLEETKR (101 aa)). Over residues 271-282 (ALSEKRRLEQEA) the composition is skewed to basic and acidic residues. The segment at 271–314 (ALSEKRRLEQEALPRPAPTPPESTNPFEEEEEEEEEPSAEEEAV) is disordered. Residues 297 to 314 (FEEEEEEEEEPSAEEEAV) are compositionally biased toward acidic residues.

It belongs to the EXO84 family. In terms of assembly, the exocyst complex is composed of EXOC1, EXOC2, EXOC3, EXOC4, EXOC5, EXOC6, EXOC7 and EXOC8.

It is found in the cytoplasm. The protein resides in the perinuclear region. The protein localises to the cell projection. It localises to the growth cone. Component of the exocyst complex involved in the docking of exocytic vesicles with fusion sites on the plasma membrane. The sequence is that of Exocyst complex component 8 (EXOC8) from Gallus gallus (Chicken).